Here is an 892-residue protein sequence, read N- to C-terminus: UPF0182 protein MCA2716 (892 aa).

7 helical membrane passes run 7 to 27 (LLTS…AIVL), 57 to 77 (ILSG…FWAA), 107 to 127 (GALP…ALPF), 163 to 183 (ILVL…VMVA), 206 to 226 (IHLN…YVLQ), 252 to 272 (LPLI…ALWF), and 281 to 301 (LALT…IDVV).

It belongs to the UPF0182 family.

It is found in the cell membrane. The protein is UPF0182 protein MCA2716 of Methylococcus capsulatus (strain ATCC 33009 / NCIMB 11132 / Bath).